A 135-amino-acid chain; its full sequence is uncharacterized protein (135 aa).

The next 3 helical transmembrane spans lie at 13–35 (AKVI…AMYL), 82–101 (VAVF…LLSI), and 108–130 (IYRI…PLIL).

The protein localises to the cell membrane. This is an uncharacterized protein from Archaeoglobus fulgidus (strain ATCC 49558 / DSM 4304 / JCM 9628 / NBRC 100126 / VC-16).